The chain runs to 125 residues: Snaclec B6 (125 aa).

3 disulfides stabilise this stretch: C2–C13, C30–C119, and C96–C111. Residues H9–Q120 enclose the C-type lectin domain. An N-linked (GlcNAc...) asparagine glycan is attached at N95. An N-linked (GlcNAc...) asparagine glycan is attached at N112.

Belongs to the snaclec family. As to quaternary structure, heterodimer; disulfide-linked. As to expression, expressed by the venom gland.

The protein localises to the secreted. Interferes with one step of hemostasis (modulation of platelet aggregation, or coagulation cascade, for example). This chain is Snaclec B6, found in Macrovipera lebetinus (Levantine viper).